Reading from the N-terminus, the 49-residue chain is Toxic protein HokB (49 aa).

Residues Asn-4–Thr-24 traverse the membrane as a helical segment.

Belongs to the Hok/Gef family.

It is found in the cell inner membrane. In terms of biological role, toxic component of a type I toxin-antitoxin (TA) system. When overexpressed kills cells within minutes; causes collapse of the transmembrane potential and arrest of respiration. Expression leads to membrane depolarization; when protein levels are high enough depolarization probably leads to lowered metabolic activity which in turn induces some cells to enter the persistent state in which they transiently survive antibiotic exposure. Its toxic effect is probably neutralized by antisense antitoxin RNA SokB, which is encoded in trans on the opposite DNA strand. In Escherichia coli (strain K12), this protein is Toxic protein HokB.